We begin with the raw amino-acid sequence, 442 residues long: Lipoyl synthase, apicoplast (442 aa).

The N-terminal stretch at 1–25 (MHVLTPSLYIYAFFIVCVRLKCGRS) is a signal peptide. The disordered stretch occupies residues 92-154 (LLRSESATDE…EKKPDWFHVP (63 aa)). The span at 109–127 (LKEKLKESPANWGKDKQEE) shows a compositional bias: basic and acidic residues. 7 residues coordinate [4Fe-4S] cluster: cysteine 177, cysteine 182, cysteine 188, cysteine 203, cysteine 207, cysteine 210, and serine 418. Positions 189-407 (WNIGTATIML…KEEGMKMGFK (219 aa)) constitute a Radical SAM core domain.

The protein belongs to the radical SAM superfamily. Lipoyl synthase family. It depends on [4Fe-4S] cluster as a cofactor.

It localises to the plastid. The protein localises to the apicoplast. The enzyme catalyses [[Fe-S] cluster scaffold protein carrying a second [4Fe-4S](2+) cluster] + N(6)-octanoyl-L-lysyl-[protein] + 2 oxidized [2Fe-2S]-[ferredoxin] + 2 S-adenosyl-L-methionine + 4 H(+) = [[Fe-S] cluster scaffold protein] + N(6)-[(R)-dihydrolipoyl]-L-lysyl-[protein] + 4 Fe(3+) + 2 hydrogen sulfide + 2 5'-deoxyadenosine + 2 L-methionine + 2 reduced [2Fe-2S]-[ferredoxin]. It participates in protein modification; protein lipoylation via endogenous pathway; protein N(6)-(lipoyl)lysine from octanoyl-[acyl-carrier-protein]: step 2/2. Its function is as follows. Catalyzes the radical-mediated insertion of two sulfur atoms into the C-6 and C-8 positions of the octanoyl moiety bound to the lipoyl domains of lipoate-dependent enzymes, thereby converting the octanoylated domains into lipoylated derivatives. The polypeptide is Lipoyl synthase, apicoplast (Plasmodium vivax (strain Salvador I)).